Consider the following 196-residue polypeptide: Protein hunchback (196 aa).

Disordered stretches follow at residues 16 to 56 (SHHH…SHTN), 63 to 82 (LKQQQQQQQQHQHQQQQQPM), and 156 to 196 (LTPP…KYMA). Residues 17-29 (HHHHHHHAHHSHH) are compositionally biased toward basic residues. Low complexity-rich tracts occupy residues 33–43 (SNSNASNSPHQ) and 65–80 (QQQQQQQQHQHQQQQQ). The segment covering 177 to 196 (EPEKEHDLMSNSSEDMKYMA) has biased composition (basic and acidic residues).

It belongs to the hunchback C2H2-type zinc-finger protein family.

It is found in the nucleus. Its function is as follows. Gap class segmentation protein that controls development of head structures. The protein is Protein hunchback (hb) of Drosophila adunca (Fruit fly).